Reading from the N-terminus, the 419-residue chain is NF-kappa-B essential modulator (419 aa).

Residues 1-197 (MNRHLWKSQL…REALQQQHSV (197 aa)) are required for interaction with and ubiquitination by MARCHF2. 2 positions are modified to phosphoserine; by IKKB: Ser-31 and Ser-43. The interaction with CHUK/IKBKB stretch occupies residues 44 to 111 (EQGAPETLQR…KLVERLGLEK (68 aa)). A coiled-coil region spans residues 49–356 (ETLQRCLEEN…CQESARIEDM (308 aa)). Ser-68 is modified (phosphoserine). Phosphoserine; by ATM is present on Ser-85. Residues Lys-111, Lys-139, Lys-143, Lys-226, Lys-246, and Lys-264 each participate in a glycyl lysine isopeptide (Lys-Gly) (interchain with G-Cter in ubiquitin) cross-link. Residues 150–257 (LGELQESQSR…SVVGSERKRG (108 aa)) are interaction with TANK. The ubiquitin-binding (UBAN) stretch occupies residues 242-350 (DNHIKSSVVG…SKLKASCQES (109 aa)). Positions 246 to 365 (KSSVVGSERK…MRKRHVEVSQ (120 aa)) are self-association. The tract at residues 251 to 419 (GSERKRGMQL…LQIHVMECIE (169 aa)) is required for interaction with TNFAIP3. A Glycyl lysine isopeptide (Lys-Gly) (interchain with G-Cter in SUMO); alternate cross-link involves residue Lys-277. Lys-277 participates in a covalent cross-link: Glycyl lysine isopeptide (Lys-Gly) (interchain with G-Cter in ubiquitin); alternate. Glycyl lysine isopeptide (Lys-Gly) (interchain with G-Cter in ubiquitin) cross-links involve residues Lys-283, Lys-285, Lys-292, and Lys-302. Residue Lys-309 forms a Glycyl lysine isopeptide (Lys-Gly) (interchain with G-Cter in SUMO); alternate linkage. Residue Lys-309 forms a Glycyl lysine isopeptide (Lys-Gly) (interchain with G-Cter in ubiquitin); alternate linkage. Residues Lys-321 and Lys-325 each participate in a glycyl lysine isopeptide (Lys-Gly) (interchain with G-Cter in ubiquitin) cross-link. A leucine-zipper region spans residues 322–343 (LAEKKELLQEQLEQLQREYSKL). Lys-326 participates in a covalent cross-link: Glycyl lysine isopeptide (Lys-Gly) (interchain with G-Cter in ubiquitin and interchain with MARCHF2). Residues 358-395 (KRHVEVSQAPLPPAPAYLSSPLALPSQRRSPPEEPPDF) are disordered. The span at 373–386 (AYLSSPLALPSQRR) shows a compositional bias: low complexity. A Phosphoserine; by IKKB modification is found at Ser-376. Residues 382-419 (PSQRRSPPEEPPDFCCPKCQYQAPDMDTLQIHVMECIE) form an interaction with CYLD region. Ser-387 bears the Phosphoserine mark. A CCHC NOA-type zinc finger spans residues 389–419 (PEEPPDFCCPKCQYQAPDMDTLQIHVMECIE). Cys-397 serves as a coordination point for Zn(2+). Lys-399 is covalently cross-linked (Glycyl lysine isopeptide (Lys-Gly) (interchain with G-Cter in ubiquitin)). 3 residues coordinate Zn(2+): Cys-400, His-413, and Cys-417.

As to quaternary structure, homodimer; disulfide-linked. Component of the I-kappa-B-kinase (IKK) core complex consisting of CHUK, IKBKB and IKBKG; probably four alpha/CHUK-beta/IKBKB dimers are associated with four gamma/IKBKG subunits. The IKK core complex seems to associate with regulatory or adapter proteins to form a IKK-signalosome holo-complex. The IKK complex associates with TERF2IP/RAP1, leading to promote IKK-mediated phosphorylation of RELA/p65. Part of a complex composed of NCOA2, NCOA3, CHUK/IKKA, IKBKB, IKBKG and CREBBP. Interacts with COPS3, CYLD, NALP2, TRPC4AP and PIDD1. Interacts with ATM; the complex is exported from the nucleus. Interacts with TRAF6. Interacts with IKBKE. Interacts with TANK; the interaction is enhanced by IKBKE and TBK1. Part of a ternary complex consisting of TANK, IKBKB and IKBKG. Interacts with ZFAND5. Interacts with RIPK2. Interacts with TNIP1 and TNFAIP3; TNIP1 facilitates the TNFAIP3-mediated de-ubiquitination of IKBKG. Interacts with TNFAIP3; the interaction is induced by TNF stimulation and by polyubiquitin. Binds (via UBAN region) polyubiquitin; binds both 'Lys-63'-linked and linear polyubiquitin, with higher affinity for linear ubiquitin. Interacts with NLRP10. Interacts with TANK; this interaction increases in response to DNA damage. Interacts with USP10; this interaction increases in response to DNA damage. Interacts with ZC3H12A; this interaction increases in response to DNA damage. Interacts with IFIT5; the interaction synergizes the recruitment of IKK to MAP3K7 and enhances IKK phosphorylation. Interacts with TRIM29; this interaction induces IKBKG/NEMO ubiquitination and proteolytic degradation. Interacts with TRIM13; this interaction leads to IKBKG/NEMO ubiquitination. Interacts with ARFIP2. Interacts with RIPK1. Interacts with (ubiquitinated) BCL10; interaction with polyubiquitinated BCL10 via both 'Lys-63'-linked and linear ubiquitin is required for TCR-induced NF-kappa-B activation. Interacts with MARCHF2; during the late stages of macrophage viral and bacterial infection; the interaction leads to ubiquitination and degradation of IKBKG/NEMO. In terms of assembly, (Microbial infection) Interacts with Molluscum contagiosum virus protein MC005; this interaction inhibits NF-kappa-B activation. (Microbial infection) Interacts with HTLV-1 Tax oncoprotein; the interaction activates IKBKG. As to quaternary structure, (Microbial infection) Interacts with Shigella flexneri ipah9.8; the interaction promotes TNIP1-dependent 'Lys-27'-linked polyubiquitination of IKBKG which perturbs NF-kappa-B activation during bacterial infection. In terms of assembly, (Microbial infection) Interacts with SARS coronavirus-2/SARS-CoV-2 virus protein ORF9B (via N-terminus); the interaction inhibits polyubiquitination through 'Lys-63' and NF-kappa-B activation. Post-translationally, phosphorylation at Ser-68 attenuates aminoterminal homodimerization. In terms of processing, polyubiquitinated on Lys-285 via 'Lys-63'-linked ubiquitin; the ubiquitination is mediated downstream of NOD2 and RIPK2 and probably plays a role in signaling by facilitating interactions with ubiquitin domain-containing proteins and activates the NF-kappa-B pathway. Polyubiquitinated on Lys-285 and Lys-399 through 'Lys-63'-linked ubiquitin; the ubiquitination is mediated by BCL10, MALT1 and TRAF6 and probably plays a role in signaling by facilitating interactions with ubiquitin domain-containing proteins and activates the NF-kappa-B pathway. Monoubiquitinated on Lys-277 and Lys-309; promotes nuclear export. Polyubiquitinated through 'Lys-27' by TRIM23; involved in antiviral innate and inflammatory responses. Linear polyubiquitinated on Lys-111, Lys-143, Lys-226, Lys-246, Lys-264, Lys-277, Lys-285, Lys-292, Lys-302, Lys-309 and Lys-326; the head-to-tail polyubiquitination is mediated by the LUBAC complex and plays a key role in NF-kappa-B activation. Deubiquitinated by USP10 in a TANK-dependent and -independent manner, leading to the negative regulation of NF-kappa-B signaling upon DNA damage. Ubiquitinated at Lys-326 by MARCHF2 following bacterial and viral infection which leads to its degradation. Polyubiquitinated via 'Lys-29'-linked ubiquitin; leading to lysosomal degradation. Sumoylated on Lys-277 and Lys-309 with SUMO1; the modification results in phosphorylation of Ser-85 by ATM leading to a replacement of the sumoylation by mono-ubiquitination on these residues. Post-translationally, neddylated by TRIM40, resulting in stabilization of NFKBIA and down-regulation of NF-kappa-B activity. In terms of processing, (Microbial infection) Cleaved by hepatitis A virus (HAV) protease 3C allowing the virus to disrupt the host innate immune signaling. (Microbial infection) Deubiquitinated by Epstein-Barr virus BPLF1 on both 'Lys-48' and 'Lys-63'-linked ubiquitin chains; leading to NF-kappa-B signaling inhibition. Post-translationally, (Microbial infection) Polyubiquitinated on Lys-309 and Lys-321 via 'Lys-27'-linked ubiquitin by Shigella flexneri E3 ubiquitin-protein ligase ipah9.8, leading to its degradation by the proteasome. In terms of processing, (Microbial infection) Polyubiquitination through 'Lys-63' is interrupted by interaction with SARS coronavirus-2/SARS-CoV-2 virus protein ORF9B which inhibits the NF-kappa-B pathway. Heart, brain, placenta, lung, liver, skeletal muscle, kidney and pancreas.

It localises to the cytoplasm. Its subcellular location is the nucleus. Functionally, regulatory subunit of the IKK core complex which phosphorylates inhibitors of NF-kappa-B thus leading to the dissociation of the inhibitor/NF-kappa-B complex and ultimately the degradation of the inhibitor. Its binding to scaffolding polyubiquitin plays a key role in IKK activation by multiple signaling receptor pathways. Can recognize and bind both 'Lys-63'-linked and linear polyubiquitin upon cell stimulation, with a much higher affinity for linear polyubiquitin. Could be implicated in NF-kappa-B-mediated protection from cytokine toxicity. Essential for viral activation of IRF3. Involved in TLR3- and IFIH1-mediated antiviral innate response; this function requires 'Lys-27'-linked polyubiquitination. (Microbial infection) Also considered to be a mediator for HTLV-1 Tax oncoprotein activation of NF-kappa-B. The protein is NF-kappa-B essential modulator of Homo sapiens (Human).